The sequence spans 125 residues: Cystatin-like cysteine protease inhibitor EPIC2B (125 aa).

The N-terminal stretch at 1–21 is a signal peptide; that stretch reads MSFLRPTLALLAVTALVTTSG. N45 carries N-linked (GlcNAc...) asparagine glycosylation. Residues 68–72 carry the Secondary area of contact motif; the sequence is QVVSG.

It belongs to the cystatin family. In terms of assembly, interacts with the host papain-like cysteine protease PIP1. Interacts with the host papain-like cysteine protease RCR3. Interacts with the host papain-like cysteine protease C14.

It localises to the secreted. In terms of biological role, secreted effector that interacts with and inhibits the pathogenesis-related papain-like cysteine proteases C14, PIP1 and RCR3 of host plants. Inhibition of host proteases by a pathogen extracellular protease inhibitor forms a specific type of defense-counterdefense mechanism between plants and microbial pathogens. This chain is Cystatin-like cysteine protease inhibitor EPIC2B, found in Phytophthora infestans (Potato late blight agent).